Reading from the N-terminus, the 86-residue chain is Omega-theraphotoxin-Hhn1c (86 aa).

Residues 1 to 21 (MKSIVFVALFGLALLAVVCSA) form the signal peptide. Residues 22–50 (SEDAHKELLKEVVRAMVVDKTDAVQAEER) constitute a propeptide that is removed on maturation. Intrachain disulfides connect Cys-52–Cys-66, Cys-59–Cys-71, and Cys-65–Cys-78.

The protein belongs to the neurotoxin 10 (Hwtx-1) family. 17 (Hntx-9) subfamily. Expressed by the venom gland.

It localises to the secreted. Ion channel inhibitor. This Cyriopagopus hainanus (Chinese bird spider) protein is Omega-theraphotoxin-Hhn1c.